The sequence spans 145 residues: Lipoprotein signal peptidase (145 aa).

3 helical membrane-spanning segments follow: residues 1-21, 57-77, and 79-99; these read MVYIVVLIVILLDQMVKLLVM, YLFIVITVVVISFLLIYYYKT, and GSGMVTLSTGLIIGGALGNLI. Active-site residues include D109 and D123. Residues 115–135 traverse the membrane as a helical segment; that stretch reads IWPVFNLADSSVVIGAALLIL.

Belongs to the peptidase A8 family.

It is found in the cell inner membrane. It catalyses the reaction Release of signal peptides from bacterial membrane prolipoproteins. Hydrolyzes -Xaa-Yaa-Zaa-|-(S,diacylglyceryl)Cys-, in which Xaa is hydrophobic (preferably Leu), and Yaa (Ala or Ser) and Zaa (Gly or Ala) have small, neutral side chains.. Its pathway is protein modification; lipoprotein biosynthesis (signal peptide cleavage). Functionally, this protein specifically catalyzes the removal of signal peptides from prolipoproteins. The polypeptide is Lipoprotein signal peptidase (Halothermothrix orenii (strain H 168 / OCM 544 / DSM 9562)).